Consider the following 427-residue polypeptide: Methylthioribose kinase 2 (427 aa).

ATP-binding positions include 49–53 (DGNLN), K68, and 122–124 (RYI). N51 lines the substrate pocket. D243 provides a ligand contact to substrate. 260–262 (DPE) provides a ligand contact to ATP. R370 serves as a coordination point for substrate.

It belongs to the methylthioribose kinase family. In terms of assembly, homodimer.

The catalysed reaction is 5-(methylsulfanyl)-D-ribose + ATP = 5-(methylsulfanyl)-alpha-D-ribose 1-phosphate + ADP + H(+). It functions in the pathway amino-acid biosynthesis; L-methionine biosynthesis via salvage pathway; S-methyl-5-thio-alpha-D-ribose 1-phosphate from S-methyl-5'-thioadenosine (hydrolase route): step 2/2. Catalyzes the phosphorylation of methylthioribose into methylthioribose-1-phosphate. In Oryza sativa subsp. japonica (Rice), this protein is Methylthioribose kinase 2 (MTK2).